An 81-amino-acid polypeptide reads, in one-letter code: Cytotoxin 3 (81 aa).

The N-terminal stretch at 1–21 (MKTLLLTLVVVTIVCLDLGYT) is a signal peptide. 4 disulfide bridges follow: Cys24–Cys42, Cys35–Cys59, Cys63–Cys74, and Cys75–Cys80.

It belongs to the three-finger toxin family. Short-chain subfamily. Type IA cytotoxin sub-subfamily. As to quaternary structure, monomer in solution; Homodimer and oligomer in the presence of negatively charged lipids forming a pore with a size ranging between 20 and 30 Angstroms. Interacts with Kv channel-interacting protein 1 (KCNIP1) in a calcium-independent manner. As to expression, expressed by the venom gland.

Its subcellular location is the secreted. It is found in the target cell membrane. In terms of biological role, basic protein that binds to cell membrane and depolarizes cardiomyocytes. This cytotoxin also possesses lytic activity on many other cells, including red blood cells. Interaction with sulfatides in the cell membrane induces pore formation and cell internalization. Cytotoxicity is due to pore formation, and to another mechanism independent of membrane-damaging activity. When internalized, it targets the mitochondrial membrane and induces mitochondrial swelling and fragmentation. It inhibits protein kinases C. It binds to the integrin alpha-V/beta-3 (ITGAV/ITGB3) with a moderate affinity. It also binds with high affinity to heparin. The polypeptide is Cytotoxin 3 (Naja atra (Chinese cobra)).